Reading from the N-terminus, the 226-residue chain is UPF0758 protein CHY_0341 (226 aa).

One can recognise an MPN domain in the interval 104–226 (NFLNPDDVYN…YISMKAERLF (123 aa)). Zn(2+)-binding residues include H175, H177, and D188. Residues 175 to 188 (HNHPSGDPTPSKED) carry the JAMM motif motif.

It belongs to the UPF0758 family.

This Carboxydothermus hydrogenoformans (strain ATCC BAA-161 / DSM 6008 / Z-2901) protein is UPF0758 protein CHY_0341.